We begin with the raw amino-acid sequence, 465 residues long: Cysteine--tRNA ligase (465 aa).

A Zn(2+)-binding site is contributed by cysteine 30. The short motif at 32–42 (ITVYDYCHVGH) is the 'HIGH' region element. The Zn(2+) site is built by cysteine 214, histidine 239, and glutamate 243. The 'KMSKS' region motif lies at 271–275 (KMSKS). Residue lysine 274 coordinates ATP.

This sequence belongs to the class-I aminoacyl-tRNA synthetase family. Monomer. The cofactor is Zn(2+).

It is found in the cytoplasm. It carries out the reaction tRNA(Cys) + L-cysteine + ATP = L-cysteinyl-tRNA(Cys) + AMP + diphosphate. The protein is Cysteine--tRNA ligase of Burkholderia multivorans (strain ATCC 17616 / 249).